We begin with the raw amino-acid sequence, 199 residues long: Peroxiredoxin-1 (199 aa).

Ser2 carries the post-translational modification N-acetylserine. One can recognise a Thioredoxin domain in the interval 6 to 165 (AKIGHPAPNF…TLRLVQAFQF (160 aa)). Lys7 bears the N6-acetyllysine; alternate mark. A Glycyl lysine isopeptide (Lys-Gly) (interchain with G-Cter in SUMO2); alternate cross-link involves residue Lys7. 2 positions are modified to N6-acetyllysine: Lys16 and Lys27. Ser32 carries the phosphoserine modification. Lys35 carries the post-translational modification N6-acetyllysine; alternate. An N6-succinyllysine; alternate modification is found at Lys35. The active-site Cysteine sulfenic acid (-SOH) intermediate is the Cys52. At Thr90 the chain carries Phosphothreonine. Lys120 participates in a covalent cross-link: Glycyl lysine isopeptide (Lys-Gly) (interchain with G-Cter in SUMO2). N6-acetyllysine is present on Lys136. Residues 176–199 (GWKPGSDTIKPDVQKSKEYFSKQK) form a disordered region. Positions 184–199 (IKPDVQKSKEYFSKQK) are enriched in basic and acidic residues. Lys185 participates in a covalent cross-link: Glycyl lysine isopeptide (Lys-Gly) (interchain with G-Cter in SUMO1). Position 197 is an N6-acetyllysine (Lys197).

Belongs to the peroxiredoxin family. AhpC/Prx1 subfamily. Homodimer; disulfide-linked, upon oxidation. 5 homodimers assemble to form a ring-like decamer. Interacts with GDPD5; forms a mixed-disulfide with GDPD5. Interacts with SESN1 and SESN2. Interacts with FAM107A. Phosphorylated on Thr-90 during the M-phase, which leads to a decrease in enzymatic activity. In terms of processing, acetylation increases reducing activity and resistance to superoxidation. Deacetylated by HDAC6 which decreases reducing activity. As to expression, detected in heart and skeletal muscle (at protein level).

It localises to the cytoplasm. The catalysed reaction is a hydroperoxide + [thioredoxin]-dithiol = an alcohol + [thioredoxin]-disulfide + H2O. Functionally, thiol-specific peroxidase that catalyzes the reduction of hydrogen peroxide and organic hydroperoxides to water and alcohols, respectively. Plays a role in cell protection against oxidative stress by detoxifying peroxides and as sensor of hydrogen peroxide-mediated signaling events. Might participate in the signaling cascades of growth factors and tumor necrosis factor-alpha by regulating the intracellular concentrations of H(2)O(2). Reduces an intramolecular disulfide bond in GDPD5 that gates the ability to GDPD5 to drive postmitotic motor neuron differentiation. This is Peroxiredoxin-1 (PRDX1) from Myotis lucifugus (Little brown bat).